The following is a 695-amino-acid chain: Elongation factor G 1 (695 aa).

The tr-type G domain maps to 6-282 (STFRNIGISA…AITYYLPDPT (277 aa)). Residues 15-22 (AHIDSGKT), 82-86 (DTPGH), and 136-139 (NKCD) contribute to the GTP site.

It belongs to the TRAFAC class translation factor GTPase superfamily. Classic translation factor GTPase family. EF-G/EF-2 subfamily.

It is found in the cytoplasm. Its function is as follows. Catalyzes the GTP-dependent ribosomal translocation step during translation elongation. During this step, the ribosome changes from the pre-translocational (PRE) to the post-translocational (POST) state as the newly formed A-site-bound peptidyl-tRNA and P-site-bound deacylated tRNA move to the P and E sites, respectively. Catalyzes the coordinated movement of the two tRNA molecules, the mRNA and conformational changes in the ribosome. The chain is Elongation factor G 1 (fusA) from Treponema pallidum (strain Nichols).